A 227-amino-acid chain; its full sequence is Octanoyltransferase (227 aa).

In terms of domain architecture, BPL/LPL catalytic spans 34–212 (RQREDGLMLL…AFAEVFPVTW (179 aa)). Substrate contacts are provided by residues 76-83 (RGGEVTYH), 143-145 (AIA), and 156-158 (GFA). C174 serves as the catalytic Acyl-thioester intermediate.

The protein belongs to the LipB family.

It localises to the cytoplasm. It catalyses the reaction octanoyl-[ACP] + L-lysyl-[protein] = N(6)-octanoyl-L-lysyl-[protein] + holo-[ACP] + H(+). The protein operates within protein modification; protein lipoylation via endogenous pathway; protein N(6)-(lipoyl)lysine from octanoyl-[acyl-carrier-protein]: step 1/2. In terms of biological role, catalyzes the transfer of endogenously produced octanoic acid from octanoyl-acyl-carrier-protein onto the lipoyl domains of lipoate-dependent enzymes. Lipoyl-ACP can also act as a substrate although octanoyl-ACP is likely to be the physiological substrate. The chain is Octanoyltransferase from Synechocystis sp. (strain ATCC 27184 / PCC 6803 / Kazusa).